The primary structure comprises 302 residues: Probable alpha-L-glutamate ligase 1 (302 aa).

Residues 104–287 form the ATP-grasp domain; the sequence is MQLLSRKGIG…VANMIIEFIE (184 aa). ATP is bound by residues Lys-141, 178-179, Asp-187, and 211-213; these read EY and RSN. Mg(2+) is bound by residues Asp-248, Glu-260, and Asn-262. Residues Asp-248, Glu-260, and Asn-262 each coordinate Mn(2+).

It belongs to the RimK family. The cofactor is Mg(2+). It depends on Mn(2+) as a cofactor.

This Pseudoalteromonas atlantica (strain T6c / ATCC BAA-1087) protein is Probable alpha-L-glutamate ligase 1.